Consider the following 674-residue polypeptide: Translation initiation factor IF-2 (674 aa).

The 171-residue stretch at 174–344 (IRPPVVTVMG…LLVAELREIK (171 aa)) folds into the tr-type G domain. The tract at residues 183–190 (GHVDHGKT) is G1. Residue 183–190 (GHVDHGKT) participates in GTP binding. Residues 208–212 (GITQS) form a G2 region. The G3 stretch occupies residues 229–232 (DTPG). GTP contacts are provided by residues 229 to 233 (DTPGH) and 283 to 286 (NKID). Positions 283 to 286 (NKID) are G4. Residues 320–322 (SAR) are G5.

This sequence belongs to the TRAFAC class translation factor GTPase superfamily. Classic translation factor GTPase family. IF-2 subfamily.

The protein resides in the cytoplasm. Its function is as follows. One of the essential components for the initiation of protein synthesis. Protects formylmethionyl-tRNA from spontaneous hydrolysis and promotes its binding to the 30S ribosomal subunits. Also involved in the hydrolysis of GTP during the formation of the 70S ribosomal complex. This Pseudothermotoga lettingae (strain ATCC BAA-301 / DSM 14385 / NBRC 107922 / TMO) (Thermotoga lettingae) protein is Translation initiation factor IF-2.